The following is a 906-amino-acid chain: Coatomer subunit beta' (906 aa).

WD repeat units lie at residues 13–52 (ARSD…LVKT), 55–94 (VCDL…RVHM), 97–136 (AHSD…SCSQ), 140–180 (GHTH…PNFT), 183–224 (GHEK…CVQT), 227–266 (GHAQ…LEST), 350–388 (SCEI…NKSF), and 390–425 (SAQE…KSFK). Lys627 is subject to N6-acetyllysine. One copy of the WD 9 repeat lies at 746–783 (IRTGRLPEAAFLARTYLPSQVSRVVKLWRENLSKVNQK). The tract at residues 837 to 862 (EEAKGFQPSRSTAQQELDGKPASPTP) is disordered. The residue at position 859 (Ser859) is a Phosphoserine. Thr861 is subject to Phosphothreonine. The stretch at 866-890 (ASHTANKEEKSLLELEVDLDNLELE) forms a coiled coil.

Belongs to the WD repeat COPB2 family. In terms of assembly, oligomeric complex that consists of at least the alpha, beta, beta', gamma, delta, epsilon and zeta subunits. Probably interacts with PEX11A. Interacts with SCYL1. Interacts with JAGN1.

It is found in the cytoplasm. Its subcellular location is the cytosol. The protein resides in the golgi apparatus membrane. The protein localises to the cytoplasmic vesicle. It localises to the COPI-coated vesicle membrane. Its function is as follows. The coatomer is a cytosolic protein complex that binds to dilysine motifs and reversibly associates with Golgi non-clathrin-coated vesicles, which further mediate biosynthetic protein transport from the ER, via the Golgi up to the trans Golgi network. Coatomer complex is required for budding from Golgi membranes, and is essential for the retrograde Golgi-to-ER transport of dilysine-tagged proteins. In mammals, the coatomer can only be recruited by membranes associated to ADP-ribosylation factors (ARFs), which are small GTP-binding proteins; the complex also influences the Golgi structural integrity, as well as the processing, activity, and endocytic recycling of LDL receptors. Functionally, this coatomer complex protein, essential for Golgi budding and vesicular trafficking, is a selective binding protein (RACK) for protein kinase C, epsilon type. It binds to Golgi membranes in a GTP-dependent manner. This chain is Coatomer subunit beta' (COPB2), found in Macaca fascicularis (Crab-eating macaque).